The primary structure comprises 299 residues: Cysteine synthase B (299 aa).

At lysine 40 the chain carries N6-(pyridoxal phosphate)lysine. Pyridoxal 5'-phosphate is bound by residues asparagine 70, 174–178 (GTGGT), and serine 261.

It belongs to the cysteine synthase/cystathionine beta-synthase family. Requires pyridoxal 5'-phosphate as cofactor.

It carries out the reaction O-acetyl-L-serine + hydrogen sulfide = L-cysteine + acetate. It functions in the pathway amino-acid biosynthesis; L-cysteine biosynthesis; L-cysteine from L-serine: step 2/2. The polypeptide is Cysteine synthase B (cysM) (Campylobacter jejuni subsp. jejuni serotype O:2 (strain ATCC 700819 / NCTC 11168)).